We begin with the raw amino-acid sequence, 131 residues long: Probable flagellum biosynthesis repressor protein FlbT (131 aa).

Belongs to the FlbT family.

Its function is as follows. Has a post-transcriptional repressor function in flagellum biogenesis. Associates with the 5'-UTR of fljK mRNA and promotes its degradation. The polypeptide is Probable flagellum biosynthesis repressor protein FlbT (Caulobacter sp. (strain K31)).